Consider the following 258-residue polypeptide: Dehydrodolichyl diphosphate synthase complex subunit nus1 (258 aa).

A helical transmembrane segment spans residues 5-21; the sequence is IFFYLALWVIQSVYGAW.

Belongs to the UPP synthase family. In terms of assembly, forms an active dehydrodolichyl diphosphate synthase complex with SPAC4D7.04c. Mg(2+) serves as cofactor.

The protein resides in the endoplasmic reticulum membrane. The catalysed reaction is n isopentenyl diphosphate + (2E,6E)-farnesyl diphosphate = a di-trans,poly-cis-polyprenyl diphosphate + n diphosphate. The protein operates within protein modification; protein glycosylation. With SPAC4D7.04c, forms the dehydrodolichyl diphosphate synthase (DDS) complex, an essential component of the dolichol monophosphate (Dol-P) biosynthetic machinery. Adds multiple copies of isopentenyl pyrophosphate (IPP) to farnesyl pyrophosphate (FPP) to produce dehydrodolichyl diphosphate (Dedol-PP), a precursor of dolichol which is utilized as a sugar carrier in protein glycosylation in the endoplasmic reticulum (ER). The polypeptide is Dehydrodolichyl diphosphate synthase complex subunit nus1 (nus1) (Schizosaccharomyces pombe (strain 972 / ATCC 24843) (Fission yeast)).